The primary structure comprises 132 residues: Small ribosomal subunit protein uS8 (132 aa).

Belongs to the universal ribosomal protein uS8 family. As to quaternary structure, part of the 30S ribosomal subunit. Contacts proteins S5 and S12.

Functionally, one of the primary rRNA binding proteins, it binds directly to 16S rRNA central domain where it helps coordinate assembly of the platform of the 30S subunit. The sequence is that of Small ribosomal subunit protein uS8 from Rhizobium rhizogenes (strain K84 / ATCC BAA-868) (Agrobacterium radiobacter).